The chain runs to 304 residues: Glutaminase (304 aa).

Positions 63, 114, 158, 165, 189, 240, and 258 each coordinate substrate.

This sequence belongs to the glutaminase family. In terms of assembly, homotetramer.

It catalyses the reaction L-glutamine + H2O = L-glutamate + NH4(+). This chain is Glutaminase, found in Shewanella sp. (strain ANA-3).